Consider the following 287-residue polypeptide: uncharacterized protein (287 aa).

Transmembrane regions (helical) follow at residues 27 to 47 (LTFS…FGVQ), 66 to 86 (LGTI…VTAF), 97 to 117 (WFWG…GVLL), 135 to 155 (IVFA…LSAL), 171 to 191 (IFIW…VLNF), 205 to 225 (LFPG…VYFV), and 254 to 274 (SALF…YFIL).

The protein resides in the cell membrane. This is an uncharacterized protein from Mycoplasma pneumoniae (strain ATCC 29342 / M129 / Subtype 1) (Mycoplasmoides pneumoniae).